The sequence spans 532 residues: Light-independent protochlorophyllide reductase subunit B (532 aa).

Asp36 contributes to the [4Fe-4S] cluster binding site. Asp292 functions as the Proton donor in the catalytic mechanism. 428–429 (GL) contacts substrate. The disordered stretch occupies residues 445 to 486 (EEEEPESISNGHAAAAGSEGGVPDSGEAGDAGDTDGMPWSPD).

This sequence belongs to the ChlB/BchB/BchZ family. Protochlorophyllide reductase is composed of three subunits; BchL, BchN and BchB. Forms a heterotetramer of two BchB and two BchN subunits. Requires [4Fe-4S] cluster as cofactor.

The catalysed reaction is chlorophyllide a + oxidized 2[4Fe-4S]-[ferredoxin] + 2 ADP + 2 phosphate = protochlorophyllide a + reduced 2[4Fe-4S]-[ferredoxin] + 2 ATP + 2 H2O. Its pathway is porphyrin-containing compound metabolism; bacteriochlorophyll biosynthesis (light-independent). In terms of biological role, component of the dark-operative protochlorophyllide reductase (DPOR) that uses Mg-ATP and reduced ferredoxin to reduce ring D of protochlorophyllide (Pchlide) to form chlorophyllide a (Chlide). This reaction is light-independent. The NB-protein (BchN-BchB) is the catalytic component of the complex. In Chlorobium phaeobacteroides (strain BS1), this protein is Light-independent protochlorophyllide reductase subunit B.